We begin with the raw amino-acid sequence, 541 residues long: Calcium/calmodulin-dependent protein kinase kinase (541 aa).

Residues 83-106 form a disordered region; the sequence is AVQEDDEAGPHSSNNLAATMSPNL. Residues 93–106 show a composition bias toward polar residues; it reads HSSNNLAATMSPNL. A Protein kinase domain is found at 130 to 411; that stretch reads YRLMEEIGQG…LHEVKVHTWV (282 aa). ATP is bound by residues 136–144 and Lys-159; that span reads IGQGSYGIV. Residues 169–190 are RP domain; the sequence is NFACFRQPPPRRNKENAAPSVL. Asp-276 serves as the catalytic Proton acceptor. The interval 437-442 is autoinhibitory domain; the sequence is ENCVRV. Residues 440 to 465 form a calmodulin-binding region; the sequence is VRVIPRLDTLILVKAMGHRKRFGNPF. The interval 462–512 is disordered; that stretch reads GNPFRNKLSAQSSIRDRRKSSSVKDPTYVPPPNSPPATSNNNLNSTKVDRP. Residues 497–507 are compositionally biased toward low complexity; sequence PATSNNNLNST.

This sequence belongs to the protein kinase superfamily. Ser/Thr protein kinase family. Mg(2+) serves as cofactor. In terms of tissue distribution, expressed in head and tail neurons and vulval muscles.

Its subcellular location is the cytoplasm. The enzyme catalyses L-seryl-[protein] + ATP = O-phospho-L-seryl-[protein] + ADP + H(+). The catalysed reaction is L-threonyl-[protein] + ATP = O-phospho-L-threonyl-[protein] + ADP + H(+). Activated by Ca(2+)/calmodulin. Binding of calmodulin may relieve intrasteric autoinhibition. Calcium/calmodulin-dependent protein kinase which phosphorylates cmk-1. Component of a calcium-triggered signaling cascade involved in CRE-mediated transcriptional activation, probably through cmk-1-mediated crh-1/CREB phosphorylation. Plays a role in salt-avoidance learning behavior via the phosphorylation of cmk-1. The polypeptide is Calcium/calmodulin-dependent protein kinase kinase (Caenorhabditis elegans).